The primary structure comprises 131 residues: Global transcriptional regulator Spx (131 aa).

Cys10 and Cys13 are oxidised to a cystine.

The protein belongs to the ArsC family. Spx subfamily. In terms of assembly, interacts with the C-terminal domain of the alpha subunit of the RNAP.

The protein resides in the cytoplasm. Its function is as follows. Global transcriptional regulator that plays a key role in stress response and exerts either positive or negative regulation of genes. Acts by interacting with the C-terminal domain of the alpha subunit of the RNA polymerase (RNAP). This interaction can enhance binding of RNAP to the promoter region of target genes and stimulate their transcription, or block interaction of RNAP with activator. The chain is Global transcriptional regulator Spx from Shouchella clausii (strain KSM-K16) (Alkalihalobacillus clausii).